A 165-amino-acid polypeptide reads, in one-letter code: Protein FAM219A (165 aa).

The residue at position 1 (M1) is an N-acetylmethionine. The disordered stretch occupies residues 1-114 (MMEEIDRFQV…SRYSSSGYSS (114 aa)). Over residues 32 to 44 (CDAREEKQRELAR) the composition is skewed to basic and acidic residues. A compositionally biased stretch (polar residues) spans 49–63 (KNGSMGSPVNQQPKK). Phosphoserine occurs at positions 55 and 85. T96 is modified (phosphothreonine). A phosphoserine mark is found at S98 and S105. Low complexity predominate over residues 105–114 (SRYSSSGYSS).

It belongs to the FAM219 family.

The protein is Protein FAM219A (FAM219A) of Macaca fascicularis (Crab-eating macaque).